Reading from the N-terminus, the 218-residue chain is Probable transaldolase (218 aa).

The Schiff-base intermediate with substrate role is filled by Lys87.

The protein belongs to the transaldolase family. Type 3B subfamily.

It localises to the cytoplasm. It catalyses the reaction D-sedoheptulose 7-phosphate + D-glyceraldehyde 3-phosphate = D-erythrose 4-phosphate + beta-D-fructose 6-phosphate. It participates in carbohydrate degradation; pentose phosphate pathway; D-glyceraldehyde 3-phosphate and beta-D-fructose 6-phosphate from D-ribose 5-phosphate and D-xylulose 5-phosphate (non-oxidative stage): step 2/3. Transaldolase is important for the balance of metabolites in the pentose-phosphate pathway. This Phocaeicola vulgatus (strain ATCC 8482 / DSM 1447 / JCM 5826 / CCUG 4940 / NBRC 14291 / NCTC 11154) (Bacteroides vulgatus) protein is Probable transaldolase.